A 38-amino-acid polypeptide reads, in one-letter code: MTKPNPNKQSVELNRTSLYWGLLLIFVLAVLFSNYFFN.

The chain crosses the membrane as a helical span at residues Ser17–Phe37.

It belongs to the PsbL family. In terms of assembly, PSII is composed of 1 copy each of membrane proteins PsbA, PsbB, PsbC, PsbD, PsbE, PsbF, PsbH, PsbI, PsbJ, PsbK, PsbL, PsbM, PsbT, PsbX, PsbY, PsbZ, Psb30/Ycf12, at least 3 peripheral proteins of the oxygen-evolving complex and a large number of cofactors. It forms dimeric complexes.

It localises to the plastid. Its subcellular location is the chloroplast thylakoid membrane. One of the components of the core complex of photosystem II (PSII). PSII is a light-driven water:plastoquinone oxidoreductase that uses light energy to abstract electrons from H(2)O, generating O(2) and a proton gradient subsequently used for ATP formation. It consists of a core antenna complex that captures photons, and an electron transfer chain that converts photonic excitation into a charge separation. This subunit is found at the monomer-monomer interface and is required for correct PSII assembly and/or dimerization. This Huperzia lucidula (Shining clubmoss) protein is Photosystem II reaction center protein L.